Consider the following 392-residue polypeptide: DNA-directed RNA polymerase subunit Rpo1C (392 aa).

Belongs to the RNA polymerase beta' chain family. As to quaternary structure, part of the RNA polymerase complex.

The protein resides in the cytoplasm. It carries out the reaction RNA(n) + a ribonucleoside 5'-triphosphate = RNA(n+1) + diphosphate. In terms of biological role, DNA-dependent RNA polymerase (RNAP) catalyzes the transcription of DNA into RNA using the four ribonucleoside triphosphates as substrates. Forms part of the jaw domain. The chain is DNA-directed RNA polymerase subunit Rpo1C from Saccharolobus islandicus (strain Y.N.15.51 / Yellowstone #2) (Sulfolobus islandicus).